The following is a 196-amino-acid chain: Ribosome maturation factor RimP (196 aa).

The interval 176–196 (ETNFDEVSTELETDTPSEGDQ) is disordered. Positions 177-196 (TNFDEVSTELETDTPSEGDQ) are enriched in acidic residues.

The protein belongs to the RimP family.

The protein localises to the cytoplasm. Its function is as follows. Required for maturation of 30S ribosomal subunits. In Roseobacter denitrificans (strain ATCC 33942 / OCh 114) (Erythrobacter sp. (strain OCh 114)), this protein is Ribosome maturation factor RimP.